A 249-amino-acid polypeptide reads, in one-letter code: MTRKLVLLRHGQSQWNSMNRFTGWVDIGLTEQGHQEATMAGHLMKEEGLEFDVAHTSLLKRAIHTLQDALKALDQDWLPIYKSWRLNERHYGALQGLDKIDTAAKHGEEQVNIWRRSYDIQPPPIDLDDPSHPMRDRRYAALDRKVLPVTESLKNTLERVLPYWNDAIAPQLNDNKTVLISAHGNSLRALYKYLNQESDEKILNVNIPTGIPLLFELSDTLQVVSYRYLGDPDAAQRASEMVANQGKAK.

Residues 9 to 16, 22 to 23, arginine 61, 88 to 91, lysine 99, 115 to 116, and 184 to 185 each bind substrate; these read RHGQSQWN, TG, ERHY, RR, and GN. The active-site Tele-phosphohistidine intermediate is histidine 10. The Proton donor/acceptor role is filled by glutamate 88.

The protein belongs to the phosphoglycerate mutase family. BPG-dependent PGAM subfamily. Homodimer.

It carries out the reaction (2R)-2-phosphoglycerate = (2R)-3-phosphoglycerate. The protein operates within carbohydrate degradation; glycolysis; pyruvate from D-glyceraldehyde 3-phosphate: step 3/5. Its function is as follows. Catalyzes the interconversion of 2-phosphoglycerate and 3-phosphoglycerate. This chain is 2,3-bisphosphoglycerate-dependent phosphoglycerate mutase, found in Xylella fastidiosa (strain 9a5c).